The chain runs to 406 residues: MIQLSEDQIVKVTGDVSSPKGFQAKGVHCGLRYSKKDLGVIISETPAVSAAVYTQSHFQAAPIKVTQDSLKHGPTLKAVIVNSAIANACTGEQGLKDAYTMRESFASQLGIEPELVAVSSTGVIGEHLDMEKIHAGIELLKETPAGSGDFEEAILTTDTVIKQTCYELAIGGKTVTIGGAAKGSGMIHPNMATMLGFVTTDAAIEEKALQKALREITDVSFNQITVDGETSTNDMVLVMANGCAENECLTEDHPDWPVFKKALLLTCEDLAKEIARDGEGATKLIEAQVQGAKNNLDANVIAKKIVGSNLVKTAVYGTDANWGRIIGAIGHSAAQVTAEEVEVYLGGQCLFKNNEPQPFSESIAKEYLEGDEITIVIKMAEGDGNGRAWGCDLTYDYIKINASYRT.

Positions 156, 182, 193, 279, 401, and 406 each coordinate substrate. Catalysis depends on T193, which acts as the Nucleophile.

The protein belongs to the ArgJ family. In terms of assembly, heterotetramer of two alpha and two beta chains.

The protein localises to the cytoplasm. It carries out the reaction N(2)-acetyl-L-ornithine + L-glutamate = N-acetyl-L-glutamate + L-ornithine. The catalysed reaction is L-glutamate + acetyl-CoA = N-acetyl-L-glutamate + CoA + H(+). Its pathway is amino-acid biosynthesis; L-arginine biosynthesis; L-ornithine and N-acetyl-L-glutamate from L-glutamate and N(2)-acetyl-L-ornithine (cyclic): step 1/1. It participates in amino-acid biosynthesis; L-arginine biosynthesis; N(2)-acetyl-L-ornithine from L-glutamate: step 1/4. Feedback inhibition by L-arginine. Its function is as follows. Catalyzes two activities which are involved in the cyclic version of arginine biosynthesis: the synthesis of N-acetylglutamate from glutamate and acetyl-CoA as the acetyl donor, and of ornithine by transacetylation between N(2)-acetylornithine and glutamate. This is Arginine biosynthesis bifunctional protein ArgJ from Bacillus amyloliquefaciens (Bacillus velezensis).